A 205-amino-acid polypeptide reads, in one-letter code: Large ribosomal subunit protein uL3 (205 aa).

The segment at 126 to 150 (GGPKTHGQSDRHRAPGSISSTTTPG) is disordered.

It belongs to the universal ribosomal protein uL3 family. As to quaternary structure, part of the 50S ribosomal subunit. Forms a cluster with proteins L14 and L19.

Functionally, one of the primary rRNA binding proteins, it binds directly near the 3'-end of the 23S rRNA, where it nucleates assembly of the 50S subunit. The sequence is that of Large ribosomal subunit protein uL3 from Dehalococcoides mccartyi (strain ATCC BAA-2266 / KCTC 15142 / 195) (Dehalococcoides ethenogenes (strain 195)).